The chain runs to 275 residues: Lectin DB58 (275 aa).

The N-terminal stretch at 1–22 is a signal peptide; sequence MASSTVSVVLSLFLLLLTQAYS. Residues N34 and N101 are each glycosylated (N-linked (GlcNAc...) asparagine).

It belongs to the leguminous lectin family. As to quaternary structure, heterodimer, composed of an alpha and a beta subunit derived from a single precursor. In terms of processing, leu-264 is missing in a major portion of the beta subunit, suggesting an origin by sequential removal of amino acids rather than a processing by endoproteolytic cleavage.

Its function is as follows. Metalloglycoprotein, containing Ca, Mg, Mn, and Zn and the carbohydrates galactose, glucosamine, mannose, and fucose. It agglutinates erythrocytes of blood group A1. In Vigna unguiculata subsp. cylindrica (Horse gram), this protein is Lectin DB58.